The chain runs to 208 residues: Small ribosomal subunit protein uS4 (208 aa).

The S4 RNA-binding domain occupies 98–163; the sequence is TRLDNVVFRL…TPLFKEIVDG (66 aa).

It belongs to the universal ribosomal protein uS4 family. In terms of assembly, part of the 30S ribosomal subunit. Contacts protein S5. The interaction surface between S4 and S5 is involved in control of translational fidelity.

One of the primary rRNA binding proteins, it binds directly to 16S rRNA where it nucleates assembly of the body of the 30S subunit. Functionally, with S5 and S12 plays an important role in translational accuracy. The sequence is that of Small ribosomal subunit protein uS4 from Heliobacterium modesticaldum (strain ATCC 51547 / Ice1).